Here is a 186-residue protein sequence, read N- to C-terminus: Translation initiation factor IF-3 (186 aa).

Residues 1-20 (MINRNSGKDRDRSRSGDKEL) are disordered.

It belongs to the IF-3 family. In terms of assembly, monomer.

The protein localises to the cytoplasm. Its function is as follows. IF-3 binds to the 30S ribosomal subunit and shifts the equilibrium between 70S ribosomes and their 50S and 30S subunits in favor of the free subunits, thus enhancing the availability of 30S subunits on which protein synthesis initiation begins. The chain is Translation initiation factor IF-3 from Borrelia duttonii (strain Ly).